The chain runs to 230 residues: Phosphoglycerate mutase-like protein 4 (230 aa).

The active-site Tele-phosphohistidine intermediate is His-21. The Proton donor/acceptor role is filled by Glu-96.

The protein belongs to the phosphoglycerate mutase family.

May play a role in carbohydrates metabolism. The protein is Phosphoglycerate mutase-like protein 4 of Arabidopsis thaliana (Mouse-ear cress).